We begin with the raw amino-acid sequence, 500 residues long: Cytochrome P450 71B34 (500 aa).

The helical transmembrane segment at 1-21 (MTNIWLLSLIFVICILVAVFN) threads the bilayer. Residue cysteine 440 participates in heme binding.

It belongs to the cytochrome P450 family. Heme is required as a cofactor.

It localises to the membrane. The sequence is that of Cytochrome P450 71B34 (CYP71B34) from Arabidopsis thaliana (Mouse-ear cress).